Here is a 461-residue protein sequence, read N- to C-terminus: Cytochrome c biogenesis protein CcsB (461 aa).

Helical transmembrane passes span 32–52 (LRLA…GTVI), 91–111 (TWWF…CTFT), and 178–198 (IGPI…IWGA).

It belongs to the Ccs1/CcsB family. May interact with CcsA.

It localises to the cellular thylakoid membrane. Functionally, required during biogenesis of c-type cytochromes (cytochrome c6 and cytochrome f) at the step of heme attachment. The protein is Cytochrome c biogenesis protein CcsB of Trichormus variabilis (strain ATCC 29413 / PCC 7937) (Anabaena variabilis).